Here is a 466-residue protein sequence, read N- to C-terminus: Putative ABC transporter ATP-binding protein MG065 (466 aa).

The 231-residue stretch at 233–463 (IELKNVYKYI…NLNPKQVEEI (231 aa)) folds into the ABC transporter domain. An ATP-binding site is contributed by 269–276 (GPSGSGKT).

The protein belongs to the ABC transporter superfamily.

In Mycoplasma genitalium (strain ATCC 33530 / DSM 19775 / NCTC 10195 / G37) (Mycoplasmoides genitalium), this protein is Putative ABC transporter ATP-binding protein MG065.